The primary structure comprises 151 residues: NADH-quinone oxidoreductase subunit I 2 (151 aa).

2 consecutive 4Fe-4S ferredoxin-type domains span residues 49–82 (PRLN…VTSE) and 93–122 (VTFT…LTQD). [4Fe-4S] cluster contacts are provided by Cys62, Cys65, Cys68, Cys72, Cys102, Cys105, Cys108, and Cys112.

The protein belongs to the complex I 23 kDa subunit family. In terms of assembly, NDH-1 is composed of 14 different subunits. Subunits NuoA, H, J, K, L, M, N constitute the membrane sector of the complex. [4Fe-4S] cluster is required as a cofactor.

The protein resides in the cell inner membrane. It catalyses the reaction a quinone + NADH + 5 H(+)(in) = a quinol + NAD(+) + 4 H(+)(out). In terms of biological role, NDH-1 shuttles electrons from NADH, via FMN and iron-sulfur (Fe-S) centers, to quinones in the respiratory chain. The immediate electron acceptor for the enzyme in this species is believed to be ubiquinone. Couples the redox reaction to proton translocation (for every two electrons transferred, four hydrogen ions are translocated across the cytoplasmic membrane), and thus conserves the redox energy in a proton gradient. This is NADH-quinone oxidoreductase subunit I 2 from Solibacter usitatus (strain Ellin6076).